A 1035-amino-acid polypeptide reads, in one-letter code: DNA polymerase I B, mitochondrial (1035 aa).

Residues 1–42 (MAVAPPLPPAPARLLRRWQGSSPWLSSSFGRTRYFSRPAFAA) constitute a mitochondrion transit peptide. A disordered region spans residues 100–124 (TNGTTPLRVGNLRHDPSEDIRSSNY). Positions 111–120 (LRHDPSEDIR) are enriched in basic and acidic residues. The region spanning 317–478 (FGNGKTCIWV…LYESLKNKLE (162 aa)) is the 3'-5' exonuclease domain. The tract at residues 699–1032 (HAIAALCEVF…VDAKYAKSWY (334 aa)) is polymerase.

It belongs to the DNA polymerase type-A family.

Its subcellular location is the mitochondrion. The enzyme catalyses DNA(n) + a 2'-deoxyribonucleoside 5'-triphosphate = DNA(n+1) + diphosphate. Not inhibited by aphidicolin. In addition to polymerase activity, this DNA polymerase exhibits 5'-3' exonuclease activity. May be required for DNA replication and accumulation in mitochondria. This is DNA polymerase I B, mitochondrial from Oryza sativa subsp. japonica (Rice).